We begin with the raw amino-acid sequence, 301 residues long: Protease HtpX homolog (301 aa).

2 consecutive transmembrane segments (helical) span residues 11 to 31 and 34 to 54; these read VLLL…IAGA and NSAF…YSYW. Histidine 138 is a binding site for Zn(2+). Residue glutamate 139 is part of the active site. Position 142 (histidine 142) interacts with Zn(2+). 2 consecutive transmembrane segments (helical) span residues 154–174 and 188–208; these read AAAV…AAIF and LVGL…QLAI. Glutamate 213 contributes to the Zn(2+) binding site.

It belongs to the peptidase M48B family. It depends on Zn(2+) as a cofactor.

The protein localises to the cell membrane. In Kocuria rhizophila (strain ATCC 9341 / DSM 348 / NBRC 103217 / DC2201), this protein is Protease HtpX homolog.